Consider the following 551-residue polypeptide: Intestinal-type alkaline phosphatase 2 (551 aa).

A signal peptide spans 1 to 19; that stretch reads MQGAWVLLLLGFRLQLSLS. Aspartate 61 contacts Mg(2+). Aspartate 61 and serine 111 together coordinate Zn(2+). Residue serine 111 is the Phosphoserine intermediate of the active site. A disulfide bridge links cysteine 140 with cysteine 202. An N-linked (GlcNAc...) asparagine glycan is attached at asparagine 141. Serine 174 contributes to the Mg(2+) binding site. Glutamate 235 serves as a coordination point for Ca(2+). Asparagine 241 is a glycosylation site (N-linked (GlcNAc...) asparagine). Residues phenylalanine 288, glutamate 289, and aspartate 304 each coordinate Ca(2+). Mg(2+) is bound at residue glutamate 330. Residues aspartate 335, histidine 339, aspartate 376, and histidine 377 each contribute to the Zn(2+) site. N-linked (GlcNAc...) asparagine glycosylation is present at asparagine 426. Cysteine 485 and cysteine 492 are disulfide-bonded. A disordered region spans residues 496–537; that stretch reads PPADENRPTTPVQNSTTTTTTTTTTTTTTTTTRVQNSASSLG. The N-linked (GlcNAc...) asparagine glycan is linked to asparagine 509. Positions 511–527 are enriched in low complexity; sequence TTTTTTTTTTTTTTTTT. A compositionally biased stretch (polar residues) spans 528–537; the sequence is RVQNSASSLG. Asparagine 531 carries the GPI-anchor amidated asparagine lipid modification. A propeptide spans 532 to 551 (removed in mature form); sequence SASSLGPATAPLAWHYWPRR.

Belongs to the alkaline phosphatase family. Homodimer. The cofactor is Mg(2+). Zn(2+) serves as cofactor. Ca(2+) is required as a cofactor.

It is found in the cell membrane. It carries out the reaction a phosphate monoester + H2O = an alcohol + phosphate. Its function is as follows. Alkaline phosphatase that can hydrolyze various phosphate compounds. This is Intestinal-type alkaline phosphatase 2 from Rattus norvegicus (Rat).